Here is a 347-residue protein sequence, read N- to C-terminus: Cannabinoid receptor 2 (347 aa).

Residues 1–33 (MEGCRETEVTNGSNGGLEFNPMKEYMILSSGQQ) are Extracellular-facing. N11 carries N-linked (GlcNAc...) asparagine glycosylation. A helical transmembrane segment spans residues 34–59 (IAVAVLCTLMGLLSALENMAVLYIIL). The Cytoplasmic segment spans residues 60 to 71 (SSRRLRRKPSYL). The helical transmembrane segment at 72–92 (FISSLAGADFLASVIFACNFV) threads the bilayer. Topologically, residues 93–104 (IFHVFHGVDSNA) are extracellular. Residues 105–129 (IFLLKIGSVTMTFTASVGSLLLTAV) traverse the membrane as a helical segment. Residues 130 to 149 (DRYLCLCYPPTYKALVTRGR) are Cytoplasmic-facing. A helical membrane pass occupies residues 150 to 172 (ALVALCVMWVLSALISYLPLMGW). Residues 173-188 (TCCPSPCSELFPLIPN) are Extracellular-facing. A helical membrane pass occupies residues 189–214 (DYLLGWLLFIAILFSGIIYTYGYVLW). The Cytoplasmic segment spans residues 215–246 (KAHRHVATLAEHQDRQVPGIARMRLDVRLAKT). Residues 247–267 (LGLVLAVLLICWFPALALMGH) form a helical membrane-spanning segment. The Extracellular portion of the chain corresponds to 268–279 (SLVTTLSDQVKE). The helical transmembrane segment at 280 to 301 (AFAFCSMLCLVNSMVNPIIYAL) threads the bilayer. At 302 to 347 (RSGEIRSAAQHCLIGWKKYLQGLGPEGKEEGPRSSVTETEADVKTT) the chain is on the cytoplasmic side. The segment at 326-347 (PEGKEEGPRSSVTETEADVKTT) is disordered. S335 and S336 each carry phosphoserine. Residue T338 is modified to Phosphothreonine.

Belongs to the G-protein coupled receptor 1 family. Expressed by cells of hematopoietic origin. Expressed in skin in suprabasal layers and hair follicles, in brain by neurons and glial cells and by osteoblasts, osteocytes, osteoclasts (at protein level).

Its subcellular location is the cell membrane. It is found in the cell projection. It localises to the dendrite. The protein localises to the perikaryon. Functionally, heterotrimeric G protein-coupled receptor for endocannabinoid 2-arachidonoylglycerol mediating inhibition of adenylate cyclase. May function in inflammatory response, nociceptive transmission and bone homeostasis. This Mus musculus (Mouse) protein is Cannabinoid receptor 2 (Cnr2).